Consider the following 191-residue polypeptide: Outer membrane lipoprotein DolP (191 aa).

The signal sequence occupies residues 1–18; it reads MKALSPIAVLISALLLQG. Cys19 carries the N-palmitoyl cysteine lipid modification. Residue Cys19 is the site of S-diacylglycerol cysteine attachment. BON domains lie at 46–115 and 124–191; these read DDGT…RQGQ and NDTW…TFIK.

Belongs to the lipoprotein DolP family.

It localises to the cell outer membrane. Plays an important role in maintaining outer membrane integrity. This is Outer membrane lipoprotein DolP from Escherichia coli O157:H7.